A 283-amino-acid chain; its full sequence is Phosphate import ATP-binding protein PstB (283 aa).

Over residues 1 to 20 (MAQTLAQTKQISQSHTFDVS) the composition is skewed to polar residues. The tract at residues 1-33 (MAQTLAQTKQISQSHTFDVSQSHHKTPNDTNSH) is disordered. One can recognise an ABC transporter domain in the interval 37–278 (YSTQNLDLWY…PSNKKTEDYI (242 aa)). 69–76 (GPSGCGKS) is a binding site for ATP.

This sequence belongs to the ABC transporter superfamily. Phosphate importer (TC 3.A.1.7) family. The complex is composed of two ATP-binding proteins (PstB), two transmembrane proteins (PstC and PstA) and a solute-binding protein (PstS).

Its subcellular location is the cell membrane. It carries out the reaction phosphate(out) + ATP + H2O = ADP + 2 phosphate(in) + H(+). Part of the ABC transporter complex PstSACB involved in phosphate import. Responsible for energy coupling to the transport system. In Staphylococcus aureus (strain bovine RF122 / ET3-1), this protein is Phosphate import ATP-binding protein PstB.